Here is a 117-residue protein sequence, read N- to C-terminus: Venom protein TxLP11 (117 aa).

An N-terminal signal peptide occupies residues 1–22 (MNTKTLIVVFLVCLLVSEVVLA).

In terms of processing, contains 4 disulfide bonds. In terms of tissue distribution, expressed by the venom gland.

Its subcellular location is the secreted. In Lychas mucronatus (Chinese swimming scorpion), this protein is Venom protein TxLP11.